Consider the following 455-residue polypeptide: Carbamoyl phosphate synthase arginine-specific small chain (455 aa).

The transit peptide at 1–28 (MFARFCKAIPAKGRAFPSVNASIQSRLM) directs the protein to the mitochondrion. Positions 219–406 (HVAVIDCGVK…IDSVRKYKAN (188 aa)) constitute a Glutamine amidotransferase type-1 domain. Catalysis depends on Cys295, which acts as the Nucleophile. Catalysis depends on residues His379 and Glu381.

Belongs to the CarA family. In terms of assembly, heterodimer composed of 2 chains; the small (or glutamine) chain promotes the hydrolysis of glutamine to ammonia, which is used by the large (or ammonia) chain to synthesize carbamoyl phosphate.

The protein localises to the mitochondrion matrix. It catalyses the reaction hydrogencarbonate + L-glutamine + 2 ATP + H2O = carbamoyl phosphate + L-glutamate + 2 ADP + phosphate + 2 H(+). It carries out the reaction L-glutamine + H2O = L-glutamate + NH4(+). It functions in the pathway amino-acid biosynthesis; L-arginine biosynthesis; carbamoyl phosphate from bicarbonate: step 1/1. In terms of biological role, small subunit of the arginine-specific carbamoyl phosphate synthase (CPSase). CPSase catalyzes the formation of carbamoyl phosphate from the ammonia moiety of glutamine, carbonate, and phosphate donated by ATP, the first step of the arginine biosynthetic pathway. The small subunit (glutamine amidotransferase) binds and cleaves glutamine to supply the large subunit with the substrate ammonia. This is Carbamoyl phosphate synthase arginine-specific small chain (cpa1) from Aspergillus clavatus (strain ATCC 1007 / CBS 513.65 / DSM 816 / NCTC 3887 / NRRL 1 / QM 1276 / 107).